The following is a 390-amino-acid chain: Ammonium/H(+) antiporter subunit AmhT (390 aa).

Helical transmembrane passes span 2–22, 31–51, 52–72, 94–114, 143–163, 178–198, 212–232, 266–286, 288–308, and 351–371; these read VIPE…TGFV, VVIF…SHLL, HFAG…EFPL, FGVT…SLII, FMLG…AVLV, LLVV…VFLF, DLFI…ALYL, LLLP…EGIP, IPLL…VGVL, and VFIL…PSIA.

This sequence belongs to the monovalent cation:proton antiporter 2 (CPA2) transporter (TC 2.A.37) family. In terms of assembly, interacts with AmhM.

The protein localises to the cell membrane. Its activity is regulated as follows. AmhT alone exhibits antiport activity, but interaction with AmhM confers different properties, such as higher KM for potassium. In terms of biological role, ammonium/proton antiporter that mediates the efflux of ammonium ions. Can also transport potassium or rubidium, but not sodium or lithium. In Alkalihalophilus pseudofirmus (strain ATCC BAA-2126 / JCM 17055 / OF4) (Bacillus pseudofirmus), this protein is Ammonium/H(+) antiporter subunit AmhT (amhT).